The primary structure comprises 216 residues: Elongation factor Ts (216 aa).

Residues 81 to 84 (TDFV) are involved in Mg(2+) ion dislocation from EF-Tu.

It belongs to the EF-Ts family.

It localises to the cytoplasm. Associates with the EF-Tu.GDP complex and induces the exchange of GDP to GTP. It remains bound to the aminoacyl-tRNA.EF-Tu.GTP complex up to the GTP hydrolysis stage on the ribosome. This Geobacter sulfurreducens (strain ATCC 51573 / DSM 12127 / PCA) protein is Elongation factor Ts.